A 173-amino-acid chain; its full sequence is NADH-ubiquinone oxidoreductase chain 6 (173 aa).

The next 5 helical transmembrane spans lie at 1-21, 27-47, 48-68, 88-108, and 139-159; these read MTYLVLLLGLCFVLGGLAVAS, YGVVGLVLASVAGCGWLLSLG, VSFVSLVLFMVYLGGMLVVFV, VGYGASFILVVIAGMIVGGLI, and YGVGMFLVAGWGLLLTLFVVL.

Belongs to the complex I subunit 6 family.

The protein localises to the mitochondrion membrane. The enzyme catalyses a ubiquinone + NADH + 5 H(+)(in) = a ubiquinol + NAD(+) + 4 H(+)(out). Core subunit of the mitochondrial membrane respiratory chain NADH dehydrogenase (Complex I) that is believed to belong to the minimal assembly required for catalysis. Complex I functions in the transfer of electrons from NADH to the respiratory chain. The immediate electron acceptor for the enzyme is believed to be ubiquinone. The sequence is that of NADH-ubiquinone oxidoreductase chain 6 (MT-ND6) from Calidris maritima (Purple sandpiper).